A 174-amino-acid polypeptide reads, in one-letter code: Large ribosomal subunit protein uL10 (174 aa).

The protein belongs to the universal ribosomal protein uL10 family. Part of the ribosomal stalk of the 50S ribosomal subunit. The N-terminus interacts with L11 and the large rRNA to form the base of the stalk. The C-terminus forms an elongated spine to which L12 dimers bind in a sequential fashion forming a multimeric L10(L12)X complex.

Functionally, forms part of the ribosomal stalk, playing a central role in the interaction of the ribosome with GTP-bound translation factors. The polypeptide is Large ribosomal subunit protein uL10 (Coxiella burnetii (strain CbuK_Q154) (Coxiella burnetii (strain Q154))).